Consider the following 105-residue polypeptide: 5,5'-dehydrodivanillate O-demethylase ferredoxin subunit (105 aa).

A 2Fe-2S ferredoxin-type domain is found at 2–105; it reads AQLKVVTRDG…GMTVTIAPED (104 aa). C40, C46, C49, and C86 together coordinate [2Fe-2S] cluster.

This sequence belongs to the adrenodoxin/putidaredoxin family. In terms of assembly, monomer. The three-component monooxygenase is composed of an oxygenase (LigXa), a ferredoxin (LigXc) and a ferredoxin reductase (LigXd). The cofactor is [2Fe-2S] cluster.

It catalyses the reaction 5,5'-dehydrodivanillate + NADH + O2 + H(+) = 2,2',3-trihydroxy-3'-methoxy-5,5'-dicarboxybiphenyl + formaldehyde + NAD(+) + H2O. Functionally, involved in the catabolism of 5,5'-dehydrodivanillate (DDVA), an intermediate in the biodegradation of lignin. Part of a three-component monooxygenase that catalyzes the O-demethylation of DDVA, leading to the formation of 2,2',3-trihydroxy-3'-methoxy-5,5'-dicarboxybiphenyl (OH-DDVA). LigXc probably functions as an intermediate electron transfer protein between LigXd and LigXa. The sequence is that of 5,5'-dehydrodivanillate O-demethylase ferredoxin subunit from Sphingobium sp. (strain NBRC 103272 / SYK-6).